Here is a 146-residue protein sequence, read N- to C-terminus: Hemoglobin subunit beta (146 aa).

At V1 the chain carries N-acetylvaline. The Globin domain maps to 2–146 (HLTAEEKSAV…VANALAHKYH (145 aa)). T12 carries the phosphothreonine modification. Position 44 is a phosphoserine (S44). N6-acetyllysine is present on K59. Residue H63 coordinates heme b. K82 carries the N6-acetyllysine modification. Residue H92 participates in heme b binding. C93 carries the post-translational modification S-nitrosocysteine. K144 bears the N6-acetyllysine mark.

Belongs to the globin family. As to quaternary structure, heterotetramer of two alpha chains and two beta chains. Red blood cells.

Involved in oxygen transport from the lung to the various peripheral tissues. The polypeptide is Hemoglobin subunit beta (HBB) (Leptonychotes weddellii (Weddell seal)).